The primary structure comprises 283 residues: Movement protein (283 aa).

This sequence belongs to the tenuiviruses pc4 protein family.

Functionally, transports viral genome to neighboring plant cells directly through plasmosdesmata, without any budding. The movement protein allows efficient cell to cell propagation, by bypassing the host cell wall barrier. The chain is Movement protein from Maize stripe virus (MStV).